Consider the following 243-residue polypeptide: Triosephosphate isomerase (243 aa).

A substrate-binding site is contributed by 9-11 (NWK). Catalysis depends on histidine 96, which acts as the Electrophile. Glutamate 165 serves as the catalytic Proton acceptor. Substrate-binding positions include glycine 171, serine 204, and 225–226 (GG).

The protein belongs to the triosephosphate isomerase family. As to quaternary structure, homodimer.

It is found in the cytoplasm. It carries out the reaction D-glyceraldehyde 3-phosphate = dihydroxyacetone phosphate. It functions in the pathway carbohydrate biosynthesis; gluconeogenesis. Its pathway is carbohydrate degradation; glycolysis; D-glyceraldehyde 3-phosphate from glycerone phosphate: step 1/1. Functionally, involved in the gluconeogenesis. Catalyzes stereospecifically the conversion of dihydroxyacetone phosphate (DHAP) to D-glyceraldehyde-3-phosphate (G3P). The chain is Triosephosphate isomerase from Prochlorococcus marinus (strain MIT 9211).